Reading from the N-terminus, the 364-residue chain is Chaperone protein DnaJ (364 aa).

Residues 5 to 71 enclose the J domain; that stretch reads DYYEILGVAK…QKRQAYDQFG (67 aa). The segment at 127–205 adopts a CR-type zinc-finger fold; that stretch reads GSTVKIRIPK…CRGQGLVRKQ (79 aa). Zn(2+) is bound by residues Cys-140, Cys-143, Cys-157, Cys-160, Cys-179, Cys-182, Cys-193, and Cys-196. CXXCXGXG motif repeat units lie at residues 140-147, 157-164, 179-186, and 193-200; these read CDTCSGIG, CSICSGVG, CGTCSGTG, and CGTCRGQG.

Belongs to the DnaJ family. Homodimer. Requires Zn(2+) as cofactor.

It localises to the cytoplasm. Functionally, participates actively in the response to hyperosmotic and heat shock by preventing the aggregation of stress-denatured proteins and by disaggregating proteins, also in an autonomous, DnaK-independent fashion. Unfolded proteins bind initially to DnaJ; upon interaction with the DnaJ-bound protein, DnaK hydrolyzes its bound ATP, resulting in the formation of a stable complex. GrpE releases ADP from DnaK; ATP binding to DnaK triggers the release of the substrate protein, thus completing the reaction cycle. Several rounds of ATP-dependent interactions between DnaJ, DnaK and GrpE are required for fully efficient folding. Also involved, together with DnaK and GrpE, in the DNA replication of plasmids through activation of initiation proteins. The protein is Chaperone protein DnaJ of Ruthia magnifica subsp. Calyptogena magnifica.